Reading from the N-terminus, the 86-residue chain is Omega-theraphotoxin-Hhn1f 4 (86 aa).

The first 21 residues, 1 to 21 (MKSIVFVALFGLALLAVVCSA), serve as a signal peptide directing secretion. Residues 22–50 (SEDAHKELLKEVVRAMVVDKTDAVQAGER) constitute a propeptide that is removed on maturation. Disulfide bonds link Cys52–Cys66, Cys59–Cys71, and Cys65–Cys78.

This sequence belongs to the neurotoxin 10 (Hwtx-1) family. 17 (Hntx-9) subfamily. Expressed by the venom gland.

Its subcellular location is the secreted. Ion channel inhibitor. The polypeptide is Omega-theraphotoxin-Hhn1f 4 (Cyriopagopus hainanus (Chinese bird spider)).